The primary structure comprises 353 residues: N-methyltransferase (353 aa).

5 residues coordinate S-adenosyl-L-homocysteine: S171, A195, D218, D238, and K252. Residue D218 coordinates S-adenosyl-L-methionine.

The protein belongs to the class I-like SAM-binding methyltransferase superfamily. Cation-independent O-methyltransferase family. In terms of assembly, homodimer. In terms of tissue distribution, expressed at high levels in all tissues.

It catalyses the reaction 3-methoxytyramine + S-adenosyl-L-methionine = N-methyl-3-methoxytyramine + S-adenosyl-L-homocysteine + H(+). The enzyme catalyses mescaline + S-adenosyl-L-methionine = N-methylmescaline + S-adenosyl-L-homocysteine + H(+). It carries out the reaction tyramine + S-adenosyl-L-methionine = N-methyltyramine + S-adenosyl-L-homocysteine + H(+). The catalysed reaction is 4-hydroxy-3,5-dimethoxyphenethylamine + S-adenosyl-L-methionine = N-methyl-4-hydroxy-3,5-dimethoxyphenethylamine + S-adenosyl-L-homocysteine + H(+). Its pathway is aromatic compound metabolism. It participates in alkaloid biosynthesis. Functionally, N-methyltransferase participating in the biosynthesis of natural products derived from phenylethylamine, including mescaline, a natural hallucinogen potentially used in psychotherapeutic treatments. Catalyzes the N-methylation of many substrates, including 3-methoxytyramine, 5-hydroxy-3,4-dimethoxyphenethylamine, 4-hydroxy-3,5-dimethoxyphenethylamine, tyramine and mescaline. The protein is N-methyltransferase of Lophophora williamsii (Peyote).